A 298-amino-acid chain; its full sequence is Lipoyl synthase (298 aa).

[4Fe-4S] cluster contacts are provided by Cys-40, Cys-45, Cys-51, Cys-67, Cys-71, Cys-74, and Ser-280. The Radical SAM core domain occupies 53–269 (AVRKTATFMI…KEIALSKGFS (217 aa)).

The protein belongs to the radical SAM superfamily. Lipoyl synthase family. It depends on [4Fe-4S] cluster as a cofactor.

Its subcellular location is the cytoplasm. It carries out the reaction [[Fe-S] cluster scaffold protein carrying a second [4Fe-4S](2+) cluster] + N(6)-octanoyl-L-lysyl-[protein] + 2 oxidized [2Fe-2S]-[ferredoxin] + 2 S-adenosyl-L-methionine + 4 H(+) = [[Fe-S] cluster scaffold protein] + N(6)-[(R)-dihydrolipoyl]-L-lysyl-[protein] + 4 Fe(3+) + 2 hydrogen sulfide + 2 5'-deoxyadenosine + 2 L-methionine + 2 reduced [2Fe-2S]-[ferredoxin]. The protein operates within protein modification; protein lipoylation via endogenous pathway; protein N(6)-(lipoyl)lysine from octanoyl-[acyl-carrier-protein]. In terms of biological role, catalyzes the radical-mediated insertion of two sulfur atoms into the C-6 and C-8 positions of the octanoyl moiety bound to the lipoyl domains of lipoate-dependent enzymes, thereby converting the octanoylated domains into lipoylated derivatives. The chain is Lipoyl synthase from Bacillus anthracis (strain A0248).